Reading from the N-terminus, the 859-residue chain is Nitrate reductase [NADPH] (859 aa).

Cys-137 contributes to the Mo-molybdopterin binding site. The region spanning 502–578 (DVVIKYSEFE…LPSMHLGRLE (77 aa)) is the Cytochrome b5 heme-binding domain. Heme contacts are provided by His-538 and His-561. An FAD-binding FR-type domain is found at 602–713 (RKWHKITLAE…KGPVGEFEYV (112 aa)). FAD is bound by residues 655 to 658 (RAYT), 672 to 676 (LIKVY), Phe-677, 687 to 689 (IMT), Ser-737, and Thr-740. 829–838 (MLLVCGPPGM) contacts NADP(+).

This sequence belongs to the nitrate reductase family. As to quaternary structure, homodimer. Requires FAD as cofactor. The cofactor is heme. It depends on Mo-molybdopterin as a cofactor.

The enzyme catalyses nitrite + NADP(+) + H2O = nitrate + NADPH + H(+). Functionally, nitrate reductase is a key enzyme involved in the first step of nitrate assimilation in plants, fungi and bacteria. This Pichia angusta (Yeast) protein is Nitrate reductase [NADPH] (YNR1).